A 427-amino-acid polypeptide reads, in one-letter code: Gamma-glutamyl phosphate reductase (427 aa).

This sequence belongs to the gamma-glutamyl phosphate reductase family.

Its subcellular location is the cytoplasm. The catalysed reaction is L-glutamate 5-semialdehyde + phosphate + NADP(+) = L-glutamyl 5-phosphate + NADPH + H(+). It participates in amino-acid biosynthesis; L-proline biosynthesis; L-glutamate 5-semialdehyde from L-glutamate: step 2/2. Its function is as follows. Catalyzes the NADPH-dependent reduction of L-glutamate 5-phosphate into L-glutamate 5-semialdehyde and phosphate. The product spontaneously undergoes cyclization to form 1-pyrroline-5-carboxylate. The sequence is that of Gamma-glutamyl phosphate reductase from Allorhizobium ampelinum (strain ATCC BAA-846 / DSM 112012 / S4) (Agrobacterium vitis (strain S4)).